The following is a 100-amino-acid chain: Large ribosomal subunit protein uL23 (100 aa).

The protein belongs to the universal ribosomal protein uL23 family. As to quaternary structure, part of the 50S ribosomal subunit. Contacts protein L29, and trigger factor when it is bound to the ribosome.

Its function is as follows. One of the early assembly proteins it binds 23S rRNA. One of the proteins that surrounds the polypeptide exit tunnel on the outside of the ribosome. Forms the main docking site for trigger factor binding to the ribosome. This is Large ribosomal subunit protein uL23 from Shigella dysenteriae serotype 1 (strain Sd197).